The chain runs to 207 residues: ATP-dependent Clp protease proteolytic subunit 1 (207 aa).

Ser-103 serves as the catalytic Nucleophile. The active site involves His-128.

This sequence belongs to the peptidase S14 family. Fourteen ClpP subunits assemble into 2 heptameric rings which stack back to back to give a disk-like structure with a central cavity, resembling the structure of eukaryotic proteasomes.

It is found in the cytoplasm. It carries out the reaction Hydrolysis of proteins to small peptides in the presence of ATP and magnesium. alpha-casein is the usual test substrate. In the absence of ATP, only oligopeptides shorter than five residues are hydrolyzed (such as succinyl-Leu-Tyr-|-NHMec, and Leu-Tyr-Leu-|-Tyr-Trp, in which cleavage of the -Tyr-|-Leu- and -Tyr-|-Trp bonds also occurs).. Cleaves peptides in various proteins in a process that requires ATP hydrolysis. Has a chymotrypsin-like activity. Plays a major role in the degradation of misfolded proteins. This chain is ATP-dependent Clp protease proteolytic subunit 1, found in Synechococcus sp. (strain CC9605).